Reading from the N-terminus, the 136-residue chain is Large-conductance mechanosensitive channel (136 aa).

The next 2 membrane-spanning stretches (helical) occupy residues 10-30 (FAMR…AAFG) and 76-96 (GVFI…FMAI).

Belongs to the MscL family. Homopentamer.

Its subcellular location is the cell inner membrane. In terms of biological role, channel that opens in response to stretch forces in the membrane lipid bilayer. May participate in the regulation of osmotic pressure changes within the cell. This chain is Large-conductance mechanosensitive channel, found in Escherichia coli O139:H28 (strain E24377A / ETEC).